Here is a 337-residue protein sequence, read N- to C-terminus: MGKIKIGINGFGRIGRLVARVALQSEDVELVAVNDPFITTDYMTYMFKYDTVHGHWKHSDITLKDSKTLLFGDKPVTVFGIRNPEEIPWGEAGAEYVVESTGVFTDKDKAAAHLKGGAKKVVISAPSKDAPMFVVGVNEDKYTSDVNIVSNASCTTNCLAPLAKVIHDNFGIVEGLMTTVHAITATQKTVDGPSAKDWRGGRAASFNIIPSSTGAAKAVGKVLPDLNGKLTGMSFRVPTVDVSVVDLTVRIEKGASYEDIKKAIKAASEGPLKGIMGYVEEDLVSTDFLGDSRSSIFDAKAGIALNDHFVKLVSWYDNEWGYSNRVVDLIRHMFKTQ.

The segment at 1 to 151 (MGKIKIGING…YTSDVNIVSN (151 aa)) is binding to NAD. NAD(+) contacts are provided by residues 13–14 (RI), D35, and R82. Residues 152–337 (ASCTTNCLAP…DLIRHMFKTQ (186 aa)) are catalytic. Residues 153–155 (SCT), T184, 213–214 (TG), and R236 each bind D-glyceraldehyde 3-phosphate. Residue C154 is the Nucleophile of the active site. N318 lines the NAD(+) pocket.

This sequence belongs to the glyceraldehyde-3-phosphate dehydrogenase family. As to quaternary structure, homotetramer.

The protein localises to the cytoplasm. The catalysed reaction is D-glyceraldehyde 3-phosphate + phosphate + NAD(+) = (2R)-3-phospho-glyceroyl phosphate + NADH + H(+). It functions in the pathway carbohydrate degradation; glycolysis; pyruvate from D-glyceraldehyde 3-phosphate: step 1/5. Its function is as follows. Key enzyme in glycolysis that catalyzes the first step of the pathway by converting D-glyceraldehyde 3-phosphate (G3P) into 3-phospho-D-glyceroyl phosphate. Essential for the maintenance of cellular ATP levels and carbohydrate metabolism. In Zea mays (Maize), this protein is Glyceraldehyde-3-phosphate dehydrogenase 1, cytosolic (GAPC1).